A 5634-amino-acid polypeptide reads, in one-letter code: Hemicentin-1 (5634 aa).

The N-terminal stretch at 1–21 (MIAQEVVHTVFLVALFRSSLA) is a signal peptide. The VWFA domain occupies 41 to 216 (TLAFVFDVTG…EVLKWVEEAV (176 aa)). 29 Ig-like C2-type domains span residues 431–517 (PKVT…FDVS), 520–607 (PPII…VFLT), 612–697 (PKVT…STLR), 702–788 (PKLV…LTLD), 793–883 (PVFI…TTVT), 890–976 (PLIG…TSVA), 981–1067 (PSIQ…VQLT), 1072–1166 (PRVF…VKLS), 1171–1254 (PKIQ…AEVT), 1261–1353 (PSVE…YNLK), 1357–1446 (PPVI…FSVN), 1451–1540 (PSIL…IKLT), 1545–1633 (PSIK…FHVD), 1638–1723 (PTIE…REIK), 1732–1820 (PAVE…FEVT), 1825–1913 (PTIK…TQLH), 1918–2006 (PSLD…YSLQ), 2011–2096 (PSIS…RDID), 2103–2189 (PNIM…YNVN), 2194–2284 (PSIY…YNLQ), 2289–2378 (PSIT…YDLS), 2383–2472 (PSII…FGLS), 2477–2565 (PHIV…FRLN), 2570–2661 (PTIA…YEVK), 2665–2762 (PPII…VNIQ), 2765–2863 (PSFQ…YDVH), 2867–2958 (PPVI…FNLN), 2962–3050 (PPSV…VSLT), and 3055–3145 (PSIK…FHLN). 2 cysteine pairs are disulfide-bonded: Cys451–Cys499 and Cys541–Cys591. O-linked (GalNAc...) threonine glycosylation is present at Thr615. Cystine bridges form between Cys633–Cys681, Cys723–Cys772, Cys814–Cys867, Cys911–Cys960, Cys1002–Cys1051, Cys1101–Cys1150, Cys1192–Cys1240, Cys1287–Cys1337, Cys1381–Cys1430, Cys1474–Cys1524, and Cys1568–Cys1617. O-linked (GalNAc...) threonine glycans are attached at residues Thr1292 and Thr1386. The O-linked (GalNAc...) threonine glycan is linked to Thr1639. 2 disulfides stabilise this stretch: Cys1662–Cys1711 and Cys1755–Cys1804. O-linked (GalNAc...) threonine glycosylation occurs at Thr1826. 14 cysteine pairs are disulfide-bonded: Cys1847–Cys1897, Cys1941–Cys1990, Cys2032–Cys2082, Cys2124–Cys2173, Cys2217–Cys2268, Cys2313–Cys2362, Cys2407–Cys2456, Cys2500–Cys2549, Cys2596–Cys2645, Cys2695–Cys2744, Cys2798–Cys2847, Cys2893–Cys2942, Cys2985–Cys3034, and Cys3080–Cys3129. An O-linked (GalNAc...) threonine glycan is attached at Thr3151. 15 Ig-like C2-type domains span residues 3155–3227 (PETE…VASN), 3244–3334 (PSVA…FNLN), 3339–3428 (PKIR…YSLQ), 3433–3515 (PNMD…GEVS), 3526–3614 (PHIN…YLVR), 3619–3707 (PNIA…FNLT), 3712–3798 (PSIG…IDLQ), 3803–3891 (PSIA…VDLT), 3896–3982 (PTIA…VTLR), 3987–4073 (PVIQ…VKLN), 4077–4163 (PPVI…STLT), 4168–4252 (PRIQ…RIVT), 4259–4332 (PTFT…AENS), 4347–4434 (PPVF…MSLT), and 4439–4526 (PIIT…VIVQ). 8 disulfide bridges follow: Cys3172–Cys3223, Cys3267–Cys3318, Cys3363–Cys3412, Cys3456–Cys3505, Cys3549–Cys3598, Cys3642–Cys3691, Cys3733–Cys3782, and Cys3824–Cys3875. Thr3897 is a glycosylation site (O-linked (GalNAc...) threonine). 25 disulfide bridges follow: Cys3917–Cys3966, Cys4008–Cys4057, Cys4099–Cys4147, Cys4189–Cys4238, Cys4280–Cys4327, Cys4370–Cys4418, Cys4460–Cys4508, Cys4540–Cys4577, Cys4544–Cys4582, Cys4555–Cys4567, Cys4597–Cys4634, Cys4601–Cys4639, Cys4612–Cys4624, Cys4654–Cys4691, Cys4658–Cys4696, Cys4669–Cys4681, Cys4711–Cys4748, Cys4715–Cys4753, Cys4726–Cys4738, Cys4768–Cys4805, Cys4772–Cys4810, Cys4783–Cys4795, Cys4825–Cys4862, Cys4829–Cys4867, and Cys4840–Cys4852. A glycan (O-linked (GalNAc...) threonine) is linked at Thr4379. 6 consecutive TSP type-1 domains span residues 4528 to 4583 (HGGF…KLCP), 4585 to 4640 (DGHW…RPCP), 4642 to 4697 (HGVW…RHCP), 4699 to 4754 (DGRW…DPCP), 4756 to 4811 (HGNW…DMCP), and 4813 to 4868 (DGSW…QACP). Residues 4870–5092 (GPQRARGSVI…SKGDRSNQCP (223 aa)) enclose the Nidogen G2 beta-barrel domain. Positions 5106–5145 (DEDECTAGNPCSHTCHNAIGAYYCSCPKGLTIAADGRTCQ) constitute an EGF-like 1; calcium-binding domain. 3 cysteine pairs are disulfide-bonded: Cys5110-Cys5120, Cys5116-Cys5129, and Cys5131-Cys5144. The EGF-like 2; calcium-binding domain maps to 5146-5189 (DIDECALGGHTCRAGQDCDNTIGSYRCVVHCGTGFRRTSDGLSC). An EGF-like 3; calcium-binding domain is found at 5191–5228 (DINECQESSPCHQRCFNVIGSFHCGCEAGYQLKGRKCI). Intrachain disulfides connect Cys5195–Cys5205, Cys5201–Cys5214, and Cys5216–Cys5227. Positions 5229-5269 (DVNECRQNVCRPDQHCKNTRGGYKCIDLCPSGMTKAENGTC) constitute an EGF-like 4; calcium-binding domain. The EGF-like 5; calcium-binding domain occupies 5271 to 5306 (DIDECKDGTHQCRYNQICENTRGSYRCACPRGYRSQ). 8 disulfide bridges follow: Cys5275/Cys5288, Cys5282/Cys5297, Cys5318/Cys5329, Cys5325/Cys5338, Cys5340/Cys5353, Cys5435/Cys5445, Cys5441/Cys5454, and Cys5456/Cys5469. An EGF-like 6; calcium-binding domain is found at 5314-5354 (DINECEQVPKPCAHQCSNSPGSFKCICLPGQQLLGDGKSCA). One can recognise an EGF-like 7; calcium-binding domain in the interval 5431 to 5470 (DIDECQNRDTCQHECKNTIGSYQCVCPPGYRLMLNGKTCQ).

In the kidney, expressed in the glomerulus (at protein level). Expressed in whisker and hair follicles, eye, tongue, and splenic and lymph node conduits (at protein level). In the embryo, localizes to the cleavage furrow at the two-cell stage (at protein level). In neonatal skin, expressed throughout the dermis (at protein level). In adult skin, strongly concentrated at the dermal side of the basement membrane but not detectable in the deeper dermis. Shows tendon-specific localization at the myotendinous junction and is also detected in the perichondrium (at protein level). Expressed by chondrocytes residing in articular cartilage and the femoral growth plate of 52 week old mice (at protein level). Expressed in vascular endothelial cells in coronary arteries and sparsely in endocardial endothelium (at protein level). Expressed in skin, tongue, lung and eye. At 14.5 dpc, expressed in the vibrissae, dermis, forelimb, kidney, intestine, lung and iliac cartilage where expression is found mainly in mesenchymal cells.

It is found in the secreted. It localises to the extracellular space. The protein resides in the extracellular matrix. The protein localises to the basement membrane. Its subcellular location is the cytoplasm. It is found in the cell junction. It localises to the cleavage furrow. In terms of biological role, involved in transforming growth factor beta-mediated rearrangement of the podocyte cytoskeleton which includes reduction of F-actin fibers and broadening, flattening and elongation of podocytes. Plays a role in basement membrane organization. May promote cleavage furrow maturation during cytokinesis in preimplantation embryos. May play a role in the architecture of adhesive and flexible epithelial cell junctions. May play a role during myocardial remodeling by imparting an effect on cardiac fibroblast migration. The chain is Hemicentin-1 from Mus musculus (Mouse).